A 329-amino-acid polypeptide reads, in one-letter code: Putative glucose ABC transporter permease protein TsgC13 (329 aa).

Transmembrane regions (helical) follow at residues Phe3–Leu23, Gly32–Val52, Trp60–Leu80, Val89–Gly109, Ala139–Leu161, Leu193–Phe213, and Leu216–Ala236.

This sequence belongs to the binding-protein-dependent transport system permease family. The complex is composed of two ATP-binding proteins (TsgD13), two transmembrane proteins (TsgB13 and TsgC13) and a solute-binding protein (TsgA13).

The protein localises to the cell membrane. In terms of biological role, part of an ABC transporter complex involved in glucose import (Potential). Responsible for the translocation of the substrate across the membrane. The sequence is that of Putative glucose ABC transporter permease protein TsgC13 (tsgC13) from Haloferax volcanii (strain ATCC 29605 / DSM 3757 / JCM 8879 / NBRC 14742 / NCIMB 2012 / VKM B-1768 / DS2) (Halobacterium volcanii).